A 795-amino-acid chain; its full sequence is MKFSESWLREWVNPAVTTDELTHQITMAGLEVDDVLPVAGTFNGVKVGHVVECGQHPDADKLRVTKVDVGEEELLDIVCGAANCRQGLKVAVATVGAVLPGDFKIKKAKLRGQPSHGMLCSFTELGIDVESDGIMELAIDAPIGMDFRDFLALNDVTVDVDLTSNRADCFSIRGMAREVGVLNRADVTEPSVAPVAPSIDDTVAIEVKAPAACPRYLGRVVKNVNVQAKTPLWMQEKLRRCGIRSIDPVVDITNFVLLEQGQPMHAFDLAKIDGGIVVRLAEQGEKITLLDGSEAELNADTLVVADHNKALAIAGIFGGEESGVTSETKDVLLECAFFAPDHIRGRARSYGLHTDSSMRFERGVDYALQVSAMERATALLVEICGGEVAPVVAVESEAELPKPNKVALRRTKLDNLLGHHIADSDVVEILERLGMTVETTAEGWVAVAPTWRFDIAIEQDLVEEVGRIYGYDNIPNQNPAAALKMHDHQEANIPLKRVRDLLVDRGYHEAITYSFVEPEQQKLVVPGVDALILPNPISAEMSAMRLGLIQGLLNTVVHNQKRQQPRVRLFEYGLRFIPCDTAENGMRQEPMLAGVIAGTRSEEHWNIDTNTVDFFDLKGDVEAILELSANDKAYSFVAAKHPALHPGQSAAIVVDGKEIGVIGTVHPELERKFGLNGRTIVFEIEWSAINRKVIPEAVALSKFPANRRDIAVVVDEAVASGDIVNACLEVGGEFLKAAKLFDVYVGKGVEEGKKSLAIALTLQSNERTLEDADIAGAVDAIVAHVSEKFGASLRD.

The tRNA-binding domain maps to 39 to 148 (AGTFNGVKVG…IDAPIGMDFR (110 aa)). The B5 domain maps to 401-476 (PKPNKVALRR…RIYGYDNIPN (76 aa)). Positions 454, 460, 463, and 464 each coordinate Mg(2+). An FDX-ACB domain is found at 701–794 (SKFPANRRDI…VSEKFGASLR (94 aa)).

The protein belongs to the phenylalanyl-tRNA synthetase beta subunit family. Type 1 subfamily. In terms of assembly, tetramer of two alpha and two beta subunits. Mg(2+) is required as a cofactor.

The protein resides in the cytoplasm. It carries out the reaction tRNA(Phe) + L-phenylalanine + ATP = L-phenylalanyl-tRNA(Phe) + AMP + diphosphate + H(+). This is Phenylalanine--tRNA ligase beta subunit from Vibrio vulnificus (strain YJ016).